The primary structure comprises 117 residues: Anti-sigma F factor antagonist (117 aa).

Residues 3 to 113 (LGIDMNVKES…QSEQQALLTL (111 aa)) form the STAS domain. At S58 the chain carries Phosphoserine.

The protein belongs to the anti-sigma-factor antagonist family. Post-translationally, phosphorylated by SpoIIAB on a serine residue.

Its function is as follows. In the phosphorylated form it could act as an anti-anti-sigma factor that counteracts SpoIIAB and thus releases sigma f from inhibition. This chain is Anti-sigma F factor antagonist (spoIIAA), found in Bacillus subtilis (strain 168).